Consider the following 134-residue polypeptide: MKSVFTISASLAISLMLCCTAQANDHKLLGVIAMPRNETNALALKLPVCRIVKRIQLSADHGDLQLSGASVYFKAARSASQSLNIPSEIKEGQTTDWININSDNDNKRCVSKITFSGHTVNSSDMATLKIIGDD.

The signal sequence occupies residues M1 to A23.

This sequence belongs to the UPF0412 family.

The polypeptide is UPF0412 protein YaaI (Escherichia coli O157:H7).